The chain runs to 287 residues: Type 1 encapsulin shell protein EncA (287 aa).

It belongs to the encapsulin family. Family 1 subfamily. In terms of assembly, the 32 nm encapsulin nanocompartment is formed by 180 subunits; monomers form pentamers which assemble to form shells. There are 36 pores where the pentamers meet as well as 3-fold axis channels and dimer channels. The N-terminus of the protein is inside the shell.

The protein localises to the encapsulin nanocompartment. Its function is as follows. Shell component of a type 1, iron-storage encapsulin nanocompartment. Encapsulin nanocompartments are 32 nm in diameter with an iron- and phosphorus-rich core (4Fe:1P) about 24 nm in diameter. Upon expression in E.coli most particles are 32 nm, 20% are 18 nm. The core is filled with an average of 14 dense granules, 5-6 nm in diameter that are not evenly distributed. Each nanocompartment is estimated to hold 30,000-35,000 Fe atoms. The minor proteins EncB, EncC and EncD probably lie against the interior face of the nanocompartment. In Myxococcus xanthus (strain DK1622), this protein is Type 1 encapsulin shell protein EncA.